Reading from the N-terminus, the 234-residue chain is Large ribosomal subunit protein uL1 (234 aa).

The protein belongs to the universal ribosomal protein uL1 family. In terms of assembly, part of the 50S ribosomal subunit.

Binds directly to 23S rRNA. The L1 stalk is quite mobile in the ribosome, and is involved in E site tRNA release. Its function is as follows. Protein L1 is also a translational repressor protein, it controls the translation of the L11 operon by binding to its mRNA. In Sodalis glossinidius (strain morsitans), this protein is Large ribosomal subunit protein uL1.